The primary structure comprises 569 residues: Acetate/butyrate--CoA ligase AAE7, peroxisomal (569 aa).

Positions 567–569 match the Microbody targeting signal motif; that stretch reads SRL.

Belongs to the ATP-dependent AMP-binding enzyme family. Expressed in roots, leaves, stems, flowers and developing seeds.

Its subcellular location is the peroxisome. It catalyses the reaction acetate + ATP + CoA = acetyl-CoA + AMP + diphosphate. The catalysed reaction is a medium-chain fatty acid + ATP + CoA = a medium-chain fatty acyl-CoA + AMP + diphosphate. In terms of biological role, peroxisomal acetate/butyrate--CoA ligase that is probably involved in the activation of exogenous acetate for entry into the glyoxylate cycle. May play a role to prevent carbon loss from peroxisomes during lipid mobilization. In vitro, is active with both acetate and butyrate. The protein is Acetate/butyrate--CoA ligase AAE7, peroxisomal (AAE7) of Arabidopsis thaliana (Mouse-ear cress).